The following is a 310-amino-acid chain: 4-diphosphocytidyl-2-C-methyl-D-erythritol kinase (310 aa).

The active site involves Lys20. ATP is bound at residue 106 to 116 (PMGGGLGGGSS). Asp148 is an active-site residue.

The protein belongs to the GHMP kinase family. IspE subfamily. In terms of assembly, homodimer.

It catalyses the reaction 4-CDP-2-C-methyl-D-erythritol + ATP = 4-CDP-2-C-methyl-D-erythritol 2-phosphate + ADP + H(+). It functions in the pathway isoprenoid biosynthesis; isopentenyl diphosphate biosynthesis via DXP pathway; isopentenyl diphosphate from 1-deoxy-D-xylulose 5-phosphate: step 3/6. In terms of biological role, catalyzes the phosphorylation of the position 2 hydroxy group of 4-diphosphocytidyl-2C-methyl-D-erythritol. This chain is 4-diphosphocytidyl-2-C-methyl-D-erythritol kinase, found in Yersinia pseudotuberculosis serotype O:3 (strain YPIII).